We begin with the raw amino-acid sequence, 306 residues long: Ribonuclease Z (306 aa).

Zn(2+)-binding residues include H63, H65, D67, H68, H141, D211, and H269. Residue D67 is the Proton acceptor of the active site.

This sequence belongs to the RNase Z family. As to quaternary structure, homodimer. Requires Zn(2+) as cofactor.

It catalyses the reaction Endonucleolytic cleavage of RNA, removing extra 3' nucleotides from tRNA precursor, generating 3' termini of tRNAs. A 3'-hydroxy group is left at the tRNA terminus and a 5'-phosphoryl group is left at the trailer molecule.. Its function is as follows. Zinc phosphodiesterase, which displays some tRNA 3'-processing endonuclease activity. Probably involved in tRNA maturation, by removing a 3'-trailer from precursor tRNA. This Staphylococcus aureus (strain MSSA476) protein is Ribonuclease Z.